A 395-amino-acid polypeptide reads, in one-letter code: Immunity-related GTPase family M protein 2 (395 aa).

The IRG-type G domain maps to 63–239; that stretch reads NKIKIAVTGD…PKLRETLQKD (177 aa). Residues 72 to 79, 97 to 101, and 179 to 181 contribute to the GTP site; these read DSGNGMSS, TGVVR, and KLD.

Belongs to the TRAFAC class dynamin-like GTPase superfamily. IRG family. In terms of processing, ubiquitinated; polyubiquitinated in the cytosol, promoting Gbp1 recruitment to the T.gondii parasitophorous vacuole membranes.

Its subcellular location is the cytoplasmic vesicle membrane. The protein localises to the golgi apparatus membrane. It localises to the cytoplasm. It is found in the cytosol. The catalysed reaction is GTP + H2O = GDP + phosphate + H(+). Functionally, immunity-related GTPase that plays important roles in innate immunity and inflammatory response. Acts as a dynamin-like protein that binds to intracellular membranes and promotes remodeling and trafficking of those membranes. Required for clearance of acute protozoan and bacterial infections. Acts by participating to Tgtp1/Irgb6 and Gbp1-mediated parasite killing by promoting their accumulation on the T.gondii parasitophorous vacuole membranes. Also required for prolonged loading of ubiquitin and p62/Sqstm1 to parasitophorous vacuole membranes. Also acts as a key negative regulator of the inflammatory response by inhibiting the non-canonical inflammasome, thereby protecting against Casp11-driven septic shock during endotoxemia. This Mus musculus (Mouse) protein is Immunity-related GTPase family M protein 2.